The sequence spans 727 residues: DNA topoisomerase 3 (727 aa).

Residues 3–136 enclose the Toprim domain; it reads KTVVLAEKPS…LKRLWISSVT (134 aa). The Mg(2+) site is built by glutamate 9 and aspartate 105. Residues 153–592 enclose the Topo IA-type catalytic domain; it reads FENLYHSAVA…EMKEYAKQTI (440 aa). The segment at 187-192 is interaction with DNA; it reads SCGRVQ. Tyrosine 310 (O-(5'-phospho-DNA)-tyrosine intermediate) is an active-site residue. Over residues 685-711 the composition is skewed to basic and acidic residues; it reads RRAKDKNSKASKRDVHSYMKKQNKDEP. A disordered region spans residues 685–713; sequence RRAKDKNSKASKRDVHSYMKKQNKDEPIN.

The protein belongs to the type IA topoisomerase family. The cofactor is Mg(2+).

It carries out the reaction ATP-independent breakage of single-stranded DNA, followed by passage and rejoining.. In terms of biological role, releases the supercoiling and torsional tension of DNA, which is introduced during the DNA replication and transcription, by transiently cleaving and rejoining one strand of the DNA duplex. Introduces a single-strand break via transesterification at a target site in duplex DNA. The scissile phosphodiester is attacked by the catalytic tyrosine of the enzyme, resulting in the formation of a DNA-(5'-phosphotyrosyl)-enzyme intermediate and the expulsion of a 3'-OH DNA strand. The free DNA strand then undergoes passage around the unbroken strand, thus removing DNA supercoils. Finally, in the religation step, the DNA 3'-OH attacks the covalent intermediate to expel the active-site tyrosine and restore the DNA phosphodiester backbone. The polypeptide is DNA topoisomerase 3 (Bacillus licheniformis (strain ATCC 14580 / DSM 13 / JCM 2505 / CCUG 7422 / NBRC 12200 / NCIMB 9375 / NCTC 10341 / NRRL NRS-1264 / Gibson 46)).